The sequence spans 104 residues: MSEATAATAAIGKCWSVYLVRAENGALYCGISDDPLRRFDTHCSGKGARFFHSSPARALVYVEACASKGDALRRERAIKALSKRAKERLLVGVPVLREVGEPAI.

A GIY-YIG domain is found at 13-88 (KCWSVYLVRA…KALSKRAKER (76 aa)).

Belongs to the UPF0213 family.

The protein is UPF0213 protein PA3854 of Pseudomonas aeruginosa (strain ATCC 15692 / DSM 22644 / CIP 104116 / JCM 14847 / LMG 12228 / 1C / PRS 101 / PAO1).